The following is a 124-amino-acid chain: Phycocyanin PC645 alpha-3 subunit (124 aa).

Arg71 is a binding site for (2R,3E)-phycocyanobilin. Mesobiliverdin is bound by residues Cys73, Tyr81, and Lys97.

It belongs to the phycoerythrin family. In terms of assembly, heterotetramer of 2 different alpha chains and 2 identical beta chains which form 2 alpha-beta heterodimers within the heterotetramer. In terms of processing, contains one phycocyanobilin chromophore and one mesobiliverdin chromophore with binding mediated by both the alpha and beta subunits.

It is found in the plastid. The protein resides in the chloroplast thylakoid membrane. Its function is as follows. Light-harvesting photosynthetic tetrapyrrole chromophore-protein from the phycobiliprotein complex. The chain is Phycocyanin PC645 alpha-3 subunit from Chroomonas sp. (strain CCMP270).